A 490-amino-acid chain; its full sequence is Transcription factor MYB101 (490 aa).

A disordered region spans residues 1-21; the sequence is MDGGGETTATATMEGRGLKKG. 2 HTH myb-type domains span residues 15 to 67 and 68 to 122; these read GRGL…ANHL and RPNL…KRRQ. DNA-binding regions (H-T-H motif) lie at residues 43-67 and 95-118; these read WNAV…ANHL and WARM…NTRM. Residues 168 to 206 form a disordered region; that stretch reads YTNSSNTSSSSSSFSSSSSQPSKRLRPDPLVSTNPGLNP. Residues 169-186 show a composition bias toward low complexity; it reads TNSSNTSSSSSSFSSSSS.

Present mostly in flowers, siliques and floral shoot tips. Expression is restricted to the subapical pith cells of both vegetative and flowering plants and to the hypocotyl hook. Expressed in pollen grains and pollen tube. Mostly expressed in mature pollen grains, and, to a lower extent, in inflorescences and siliques.

It is found in the nucleus. Transcription activator. Binds to 5'-CAACTGTC-3' and/or 5'-TAACAAA-3' motif in target gene promoter (e.g. alpha-amylase) to promote their expression. Positive regulator of abscisic acid (ABA) responses leading to growth arrest during seed germination. Promotes the expression of aleurone-related genes (e.g. CP1, CP, GASA1, BXL1 and BXL2) in seeds. Together with MYB33 and MYB65, promotes the programmed cell death (PCD) leading to vacuolation of protein storage vacuoles (PSVs) in the aleurone layers during seed germination. Maybe involved in the regulation of leaves lamina morphogenesis. Involved in pollen grain development. Together with MYB97 and MYB120, functions as a male factor that controls pollen tube-synergid interaction in fertilization. Required for pollen tube growth arrest and sperm cell release in the female gametophyte, probably via the regulation of pollen tube-specific gene expression. This Arabidopsis thaliana (Mouse-ear cress) protein is Transcription factor MYB101.